A 386-amino-acid polypeptide reads, in one-letter code: Patatin-16 (386 aa).

Positions 1–23 are cleaved as a signal peptide; that stretch reads MATTKSFLILIVMILATTSSTFA. The 198-residue stretch at 32–229 folds into the PNPLA domain; sequence LSIDGGGIKG…TVADPALLSV (198 aa). Positions 36 to 41 match the GXGXXG motif; it reads GGGIKG. The GXSXG motif lies at 75-79; that stretch reads GTSTG. The active-site Nucleophile is the Ser77. Asn115 is a glycosylation site (N-linked (GlcNAc...) asparagine). Asp215 (proton acceptor) is an active-site residue. A DGA/G motif is present at residues 215-217; the sequence is DGA. Positions 360 to 384 form a coiled coil; the sequence is ETYEEALKRFAKLLSDRKKLRANKA.

Belongs to the patatin family.

The protein resides in the vacuole. Functionally, probable lipolytic acyl hydrolase (LAH), an activity which is thought to be involved in the response of tubers to pathogens. This Solanum tuberosum (Potato) protein is Patatin-16.